The following is a 326-amino-acid chain: Fructokinase (326 aa).

The tract at residues 275–326 (EQALRNGPDPRRQSRRRHRLPRRRQSTLGARDWSLRLEQDSDPHPPDDTFSP) is disordered. A compositionally biased stretch (basic residues) spans 287–299 (QSRRRHRLPRRRQ). Positions 307–326 (WSLRLEQDSDPHPPDDTFSP) are enriched in basic and acidic residues.

The protein belongs to the carbohydrate kinase PfkB family.

The enzyme catalyses D-fructose + ATP = D-fructose 6-phosphate + ADP + H(+). The protein is Fructokinase (frk) of Rhizobium leguminosarum bv. trifolii.